A 607-amino-acid polypeptide reads, in one-letter code: WD repeat-containing protein 1-A (607 aa).

WD repeat units lie at residues 4-45 (ELKK…IRNI), 48-87 (PAIA…IWDT), 93-135 (LLKY…LWDT), 138-176 (SVGE…FLEG), 180-218 (KFKF…LYDG), 224-263 (VCSL…IWDV), 270-306 (TTFN…YLDK), 311-351 (RPLR…YWDA), 358-408 (TFTG…KMDV), 432-474 (LKDK…LYSI), 480-518 (KDEG…VFSV), 523-561 (SEKN…VWTL), and 566-604 (TRIK…QWTV).

It belongs to the WD repeat AIP1 family.

It localises to the cell membrane. Its subcellular location is the cytoplasm. The protein localises to the cytoskeleton. The protein resides in the nucleus. In terms of biological role, induces disassembly of actin filaments in conjunction with ADF/cofilin family proteins. Doesn't sever actin filaments alone, but caps the barbed ends of filaments severed by cofilin, which blocks annealing and depolymerization and allows more extensive severing by cofilin. This chain is WD repeat-containing protein 1-A (wdr1-a), found in Xenopus laevis (African clawed frog).